The primary structure comprises 132 residues: Small ribosomal subunit protein uS8 (132 aa).

Belongs to the universal ribosomal protein uS8 family. Part of the 30S ribosomal subunit. Contacts proteins S5 and S12.

One of the primary rRNA binding proteins, it binds directly to 16S rRNA central domain where it helps coordinate assembly of the platform of the 30S subunit. This is Small ribosomal subunit protein uS8 from Mesorhizobium japonicum (strain LMG 29417 / CECT 9101 / MAFF 303099) (Mesorhizobium loti (strain MAFF 303099)).